A 382-amino-acid chain; its full sequence is Mannitol-1-phosphate 5-dehydrogenase (382 aa).

3-14 provides a ligand contact to NAD(+); it reads ALHFGAGNIGRG. An N6-acetyllysine modification is found at Lys-269.

Belongs to the mannitol dehydrogenase family.

It carries out the reaction D-mannitol 1-phosphate + NAD(+) = beta-D-fructose 6-phosphate + NADH + H(+). This chain is Mannitol-1-phosphate 5-dehydrogenase, found in Escherichia coli (strain ATCC 8739 / DSM 1576 / NBRC 3972 / NCIMB 8545 / WDCM 00012 / Crooks).